Reading from the N-terminus, the 211-residue chain is Small ribosomal subunit protein uS3 (211 aa).

Positions 38–106 (LRKFIKKAFY…NIELNIIEVK (69 aa)) constitute a KH type-2 domain.

It belongs to the universal ribosomal protein uS3 family. In terms of assembly, part of the 30S ribosomal subunit. Forms a tight complex with proteins S10 and S14.

Binds the lower part of the 30S subunit head. Binds mRNA in the 70S ribosome, positioning it for translation. This Ehrlichia canis (strain Jake) protein is Small ribosomal subunit protein uS3.